The chain runs to 335 residues: 4-hydroxy-3-methylbut-2-enyl diphosphate reductase (335 aa).

Residue Cys21 participates in [4Fe-4S] cluster binding. (2E)-4-hydroxy-3-methylbut-2-enyl diphosphate-binding residues include His50 and His86. The dimethylallyl diphosphate site is built by His50 and His86. 2 residues coordinate isopentenyl diphosphate: His50 and His86. Cys108 contacts [4Fe-4S] cluster. Position 136 (His136) interacts with (2E)-4-hydroxy-3-methylbut-2-enyl diphosphate. Residue His136 participates in dimethylallyl diphosphate binding. His136 serves as a coordination point for isopentenyl diphosphate. Catalysis depends on Glu138, which acts as the Proton donor. Thr177 serves as a coordination point for (2E)-4-hydroxy-3-methylbut-2-enyl diphosphate. Cys207 is a [4Fe-4S] cluster binding site. (2E)-4-hydroxy-3-methylbut-2-enyl diphosphate-binding residues include Ser235, Ser236, Asn237, and Ser280. Dimethylallyl diphosphate contacts are provided by Ser235, Ser236, Asn237, and Ser280. Ser235, Ser236, Asn237, and Ser280 together coordinate isopentenyl diphosphate.

The protein belongs to the IspH family. [4Fe-4S] cluster is required as a cofactor.

It carries out the reaction isopentenyl diphosphate + 2 oxidized [2Fe-2S]-[ferredoxin] + H2O = (2E)-4-hydroxy-3-methylbut-2-enyl diphosphate + 2 reduced [2Fe-2S]-[ferredoxin] + 2 H(+). It catalyses the reaction dimethylallyl diphosphate + 2 oxidized [2Fe-2S]-[ferredoxin] + H2O = (2E)-4-hydroxy-3-methylbut-2-enyl diphosphate + 2 reduced [2Fe-2S]-[ferredoxin] + 2 H(+). It participates in isoprenoid biosynthesis; dimethylallyl diphosphate biosynthesis; dimethylallyl diphosphate from (2E)-4-hydroxy-3-methylbutenyl diphosphate: step 1/1. It functions in the pathway isoprenoid biosynthesis; isopentenyl diphosphate biosynthesis via DXP pathway; isopentenyl diphosphate from 1-deoxy-D-xylulose 5-phosphate: step 6/6. Catalyzes the conversion of 1-hydroxy-2-methyl-2-(E)-butenyl 4-diphosphate (HMBPP) into a mixture of isopentenyl diphosphate (IPP) and dimethylallyl diphosphate (DMAPP). Acts in the terminal step of the DOXP/MEP pathway for isoprenoid precursor biosynthesis. In Rhizobium rhizogenes (strain K84 / ATCC BAA-868) (Agrobacterium radiobacter), this protein is 4-hydroxy-3-methylbut-2-enyl diphosphate reductase.